The chain runs to 274 residues: Large ribosomal subunit protein uL2cz/uL2cy (274 aa).

A disordered region spans residues 225-274; the sequence is NPVDHPHGGGEGRAPIGRKKPTTPWGYPALGRRSRKRKKYSDSFILRRRK.

It belongs to the universal ribosomal protein uL2 family. In terms of assembly, part of the 50S ribosomal subunit.

The protein localises to the plastid. Its subcellular location is the chloroplast. The sequence is that of Large ribosomal subunit protein uL2cz/uL2cy (rpl2-A) from Dioscorea elephantipes (Elephant's foot yam).